The chain runs to 198 residues: N-acetyltransferase 9-like protein (198 aa).

One can recognise an N-acetyltransferase domain in the interval 34 to 178 (EEIRRLTGSE…KEITMELPGE (145 aa)).

It belongs to the acetyltransferase family. GNAT subfamily.

This is N-acetyltransferase 9-like protein from Caenorhabditis briggsae.